Reading from the N-terminus, the 122-residue chain is Large ribosomal subunit protein bL12 (122 aa).

It belongs to the bacterial ribosomal protein bL12 family. Homodimer. Part of the ribosomal stalk of the 50S ribosomal subunit. Forms a multimeric L10(L12)X complex, where L10 forms an elongated spine to which 2 to 4 L12 dimers bind in a sequential fashion. Binds GTP-bound translation factors.

Its function is as follows. Forms part of the ribosomal stalk which helps the ribosome interact with GTP-bound translation factors. Is thus essential for accurate translation. This Levilactobacillus brevis (strain ATCC 367 / BCRC 12310 / CIP 105137 / JCM 1170 / LMG 11437 / NCIMB 947 / NCTC 947) (Lactobacillus brevis) protein is Large ribosomal subunit protein bL12.